A 270-amino-acid polypeptide reads, in one-letter code: Multi-heme protein MamP (270 aa).

Residues 1-6 (MNSKLV) lie on the Cytoplasmic side of the membrane. The segment at 7–20 (LLVVGVVFALVLVI) is a transmembrane helix. Topologically, residues 21-270 (GRQGGVVAPQ…GPCEACHVIN (250 aa)) are lumenal. The segment at 84–201 (NLKVFEGHWQ…GGLGFAQLEG (118 aa)) is PDZ. Residues 205 to 225 (ILPGDPRPHGYRGACTDCHPV) carry the MCR (magnetochrome) 1 motif. Residues Cys-219, Cys-222, His-223, Cys-263, Cys-266, and His-267 each coordinate heme. Residues 245–269 (ITRDAVTRGVSPHEVRGPCEACHVI) carry the MCR 2 motif.

It belongs to the magnetosome MamP family. In terms of assembly, homodimer. Heme is required as a cofactor. Subject to proteolytic cleavage which requires both MamE and MamO.

The protein localises to the cell inner membrane. Functionally, involved in redox-control of magnetite formation. Oxidizes Fe(2+) at alkaline pH; successively forms ferrihydrite (Fe(3+)(2)O(3) 0.5 H(2)O) then magnetite (Fe(3)O(4)) from an Fe(2+) solution. This Magnetospirillum gryphiswaldense (strain DSM 6361 / JCM 21280 / NBRC 15271 / MSR-1) protein is Multi-heme protein MamP.